The sequence spans 988 residues: Squamosa promoter-binding-like protein 16 (988 aa).

A disordered region spans residues 52–79; that stretch reads GTPVDLTRPSKKVRSGSPGSGGGGGGNY. Residues 69-78 are compositionally biased toward gly residues; the sequence is PGSGGGGGGN. The SBP-type zinc-finger motif lies at 79–156; that stretch reads YPKCQVDNCK…DGHNRRRRKT (78 aa). Residues C82, C87, C104, H107, C123, C126, H130, and C142 each contribute to the Zn(2+) site. Residues 139–155 carry the Bipartite nuclear localization signal motif; the sequence is KRSCRRRLDGHNRRRRK. 2 disordered regions span residues 240-262 and 289-416; these read RKNP…SSPS and GFGN…DTST. Polar residues-rich tracts occupy residues 250-262, 301-311, and 327-358; these read NPQN…SSPS, LTSSDHSATTS, and RTSS…FTSS. Residues 368 to 379 are compositionally biased toward low complexity; sequence ASSTKYYSSASS.

Zn(2+) serves as cofactor.

It localises to the nucleus. Trans-acting factor that binds specifically to the consensus nucleotide sequence 5'-TNCGTACAA-3'. The sequence is that of Squamosa promoter-binding-like protein 16 (SPL16) from Arabidopsis thaliana (Mouse-ear cress).